The sequence spans 270 residues: Thiosulfate dehydrogenase (270 aa).

The N-terminal stretch at 1 to 27 is a signal peptide; that stretch reads MRGDVRVHTASPIAAAWLLAVGLVAHA. 2 Cytochrome c domains span residues 44 to 158 and 174 to 260; these read PDGA…PVGA and PDGV…LTHP. The heme c site is built by Cys-76, Cys-79, His-80, Cys-187, Cys-190, and His-191.

Monomer. Post-translationally, binds 2 heme c groups covalently per subunit.

The protein localises to the periplasm. The catalysed reaction is 2 thiosulfate + 2 Fe(III)-[cytochrome c] = tetrathionate + 2 Fe(II)-[cytochrome c] + 2 H(+). Catalyzes the oxidation of 2 molecules of thiosulfate to tetrathionate. This chain is Thiosulfate dehydrogenase (tsdA), found in Allochromatium vinosum (strain ATCC 17899 / DSM 180 / NBRC 103801 / NCIMB 10441 / D) (Chromatium vinosum).